A 331-amino-acid polypeptide reads, in one-letter code: Putative phosphoribosylaminoimidazole-succinocarboxamide synthase (331 aa).

It belongs to the SAICAR synthetase family. Highly divergent.

The enzyme catalyses 5-amino-1-(5-phospho-D-ribosyl)imidazole-4-carboxylate + L-aspartate + ATP = (2S)-2-[5-amino-1-(5-phospho-beta-D-ribosyl)imidazole-4-carboxamido]succinate + ADP + phosphate + 2 H(+). It functions in the pathway purine metabolism; IMP biosynthesis via de novo pathway; 5-amino-1-(5-phospho-D-ribosyl)imidazole-4-carboxamide from 5-amino-1-(5-phospho-D-ribosyl)imidazole-4-carboxylate: step 1/2. This is Putative phosphoribosylaminoimidazole-succinocarboxamide synthase (purC) from Archaeoglobus fulgidus (strain ATCC 49558 / DSM 4304 / JCM 9628 / NBRC 100126 / VC-16).